Reading from the N-terminus, the 398-residue chain is Na(+)/H(+) antiporter NhaA (398 aa).

The next 12 membrane-spanning stretches (helical) occupy residues 21–41, 56–76, 94–114, 124–144, 153–173, 176–196, 201–221, 263–283, 284–304, 306–326, 333–353, and 367–387; these read AGGIILMVAAALALIVANSPL, LSVSHWVNDGLMAVFFLLVGL, VLPGIAAAGGMLVPALVYVFI, GWAIPTATDIAFALGVLSLLG, VFLTALAIIDDLGAVIIIAIF, SGLSLAYLGAAFAVIAALVVL, VMTLLPYLVLGAILWVLVLKS, IVPFFVIPIFGFANAGVSLAG, LSLGALIEPLTLGVAAGLVVG, LVGVFGSSALAIRLGLADLPA, MIGISLLCGIGFTMSLFIGLL, and VGILAGSFVAAILGAAVLLMA.

The protein belongs to the NhaA Na(+)/H(+) (TC 2.A.33) antiporter family.

It localises to the cell inner membrane. The catalysed reaction is Na(+)(in) + 2 H(+)(out) = Na(+)(out) + 2 H(+)(in). Functionally, na(+)/H(+) antiporter that extrudes sodium in exchange for external protons. The polypeptide is Na(+)/H(+) antiporter NhaA (Mesorhizobium japonicum (strain LMG 29417 / CECT 9101 / MAFF 303099) (Mesorhizobium loti (strain MAFF 303099))).